Consider the following 476-residue polypeptide: Glutamate--tRNA ligase (476 aa).

Positions 9 to 19 (PSPTGTLHIGT) match the 'HIGH' region motif. The 'KMSKS' region motif lies at 248 to 252 (KLSKR). Residue Lys-251 coordinates ATP.

This sequence belongs to the class-I aminoacyl-tRNA synthetase family. Glutamate--tRNA ligase type 1 subfamily. In terms of assembly, monomer.

Its subcellular location is the cytoplasm. The catalysed reaction is tRNA(Glu) + L-glutamate + ATP = L-glutamyl-tRNA(Glu) + AMP + diphosphate. Its function is as follows. Catalyzes the attachment of glutamate to tRNA(Glu) in a two-step reaction: glutamate is first activated by ATP to form Glu-AMP and then transferred to the acceptor end of tRNA(Glu). The sequence is that of Glutamate--tRNA ligase from Prochlorococcus marinus (strain MIT 9313).